The following is a 264-amino-acid chain: 3-methyl-2-oxobutanoate hydroxymethyltransferase (264 aa).

Mg(2+) is bound by residues D45 and D84. 3-methyl-2-oxobutanoate is bound by residues 45–46 (DS), D84, and K112. E114 contributes to the Mg(2+) binding site. The active-site Proton acceptor is E181.

This sequence belongs to the PanB family. In terms of assembly, homodecamer; pentamer of dimers. Mg(2+) is required as a cofactor.

Its subcellular location is the cytoplasm. The enzyme catalyses 3-methyl-2-oxobutanoate + (6R)-5,10-methylene-5,6,7,8-tetrahydrofolate + H2O = 2-dehydropantoate + (6S)-5,6,7,8-tetrahydrofolate. Its pathway is cofactor biosynthesis; (R)-pantothenate biosynthesis; (R)-pantoate from 3-methyl-2-oxobutanoate: step 1/2. Its function is as follows. Catalyzes the reversible reaction in which hydroxymethyl group from 5,10-methylenetetrahydrofolate is transferred onto alpha-ketoisovalerate to form ketopantoate. This chain is 3-methyl-2-oxobutanoate hydroxymethyltransferase, found in Pseudoalteromonas translucida (strain TAC 125).